The chain runs to 353 residues: Heterogeneous nuclear ribonucleoprotein D0 (353 aa).

The interval 1–89 (MSEEQFGGDG…SSPRHTEAAT (89 aa)) is disordered. N-acetylserine is present on S2. Residues 11–42 (AAAAATAAVGGSAGEQEGAMVAAAQGAAAAAG) show a composition bias toward low complexity. The segment covering 43-56 (SGSGGGSAPGGTEG) has biased composition (gly residues). Basic and acidic residues predominate over residues 62–71 (EGAKIDASKN). S69 is subject to Phosphoserine. A Glycyl lysine isopeptide (Lys-Gly) (interchain with G-Cter in SUMO2) cross-link involves residue K70. Phosphoserine occurs at positions 78, 80, and 81. The residue at position 89 (T89) is a Phosphothreonine. 2 consecutive RRM domains span residues 95 to 177 (WKMF…KTKE) and 180 to 259 (KKIF…MSKE). An N6-methyllysine modification is found at K117. T125 bears the Phosphothreonine mark. Residue K127 forms a Glycyl lysine isopeptide (Lys-Gly) (interchain with G-Cter in SUMO2) linkage. K163 is subject to N6-acetyllysine. At S188 the chain carries Phosphoserine. T191 is modified (phosphothreonine). K195 participates in a covalent cross-link: Glycyl lysine isopeptide (Lys-Gly) (interchain with G-Cter in SUMO2). Residues K241 and K249 each carry the N6-acetyllysine modification. S269 bears the Phosphoserine mark. An omega-N-methylarginine mark is found at R270, R276, R278, and R280. R343 carries the post-translational modification Asymmetric dimethylarginine; alternate. R343 is modified (dimethylated arginine; alternate). R343 is modified (omega-N-methylarginine; alternate).

Identified in a IGF2BP1-dependent mRNP granule complex containing untranslated mRNAs. Part of a complex associated with the FOS mCRD domain and consisting of PABPC1, PAIP1, CSDE1/UNR and SYNCRIP. Interacts with IGF2BP2. Interacts with GTPBP1. Interacts with EIF4G1; the interaction requires RNA. Interacts with EIF3B and RPS3. Post-translationally, methylated by PRMT1, in an insulin-dependent manner. The PRMT1-mediated methylation regulates its phosphorylation. Arg-343 is dimethylated, probably to asymmetric dimethylarginine.

It localises to the nucleus. The protein localises to the cytoplasm. In terms of biological role, binds with high affinity to RNA molecules that contain AU-rich elements (AREs) found within the 3'-UTR of many proto-oncogenes and cytokine mRNAs. Also binds to double- and single-stranded DNA sequences in a specific manner and functions a transcription factor. Each of the RNA-binding domains specifically can bind solely to a single-stranded non-monotonous 5'-UUAG-3' sequence and also weaker to the single-stranded 5'-TTAGGG-3' telomeric DNA repeat. Binds RNA oligonucleotides with 5'-UUAGGG-3' repeats more tightly than the telomeric single-stranded DNA 5'-TTAGGG-3' repeats. Binding of RRM1 to DNA inhibits the formation of DNA quadruplex structure which may play a role in telomere elongation. May be involved in translationally coupled mRNA turnover. Implicated with other RNA-binding proteins in the cytoplasmic deadenylation/translational and decay interplay of the FOS mRNA mediated by the major coding-region determinant of instability (mCRD) domain. May play a role in the regulation of the rhythmic expression of circadian clock core genes. Directly binds to the 3'UTR of CRY1 mRNA and induces CRY1 rhythmic translation. May also be involved in the regulation of PER2 translation. The chain is Heterogeneous nuclear ribonucleoprotein D0 (Hnrnpd) from Rattus norvegicus (Rat).